We begin with the raw amino-acid sequence, 85 residues long: Large ribosomal subunit protein bL27 (85 aa).

The interval 1 to 21 is disordered; sequence MAHKKGVGSSRNGRDSDGQRL.

It belongs to the bacterial ribosomal protein bL27 family.

The protein is Large ribosomal subunit protein bL27 of Citrifermentans bemidjiense (strain ATCC BAA-1014 / DSM 16622 / JCM 12645 / Bem) (Geobacter bemidjiensis).